The chain runs to 327 residues: Petrobactin synthase (327 aa).

It catalyses the reaction N(8)-citryl-spermidine + 3,4-dihydroxybenzoyl-[aryl-carrier protein] = N(1)-(3,4-dihydroxybenzoyl)-N(8)-citryl-spermidine + holo-[aryl-carrier protein] + H(+). It carries out the reaction N(8),N'(8)-citryl-bis(spermidine) + 3,4-dihydroxybenzoyl-[aryl-carrier protein] = N(1)-(3,4-dihydroxybenzoyl)-N(8),N'(8)-citryl-bis(spermidine) + holo-[aryl-carrier protein] + H(+). The enzyme catalyses N(1)-(3,4-dihydroxybenzoyl)-N(8),N'(8)-citryl-bis(spermidine) + 3,4-dihydroxybenzoyl-[aryl-carrier protein] = petrobactin + holo-[aryl-carrier protein] + H(+). It participates in siderophore biosynthesis; petrobactin biosynthesis. Its function is as follows. Involved in the biosynthesis of petrobactin, a catecholate siderophore that functions in both iron acquisition and virulence. Transfers the activated 3,4-dihydroxybenzoate (3,4-DHBA) moiety from 3,4-DHBA-loaded AsbD to different receipient molecules, including N-citryl-spermidine, N8,N'8-citryl-bis(spermidine) and N1-(3,4-dihydroxybenzoyl)-N8,N'8-citryl-bis(spermidine). Also catalyzes the transfer of the activated 3,4-DHBA moiety from 3,4-DHBA-loaded AsbD to spermidine to generate DHB-spermidine (DHB-SP). In Bacillus anthracis, this protein is Petrobactin synthase.